Consider the following 285-residue polypeptide: MFNWVKTAMLMAAITALFIVIGGMIGGSRGMTIALLFALGMNFFSYWFSDKMVLRMYNAQEVDENTAPQFYRMVRELATRANLPMPRVYLINEDAPNAFATGRNPEHAAVAATTGILRVLSEREMRGVMAHELAHVKHRDILISTITATMAGAISALANFAMFFGGRDENGRPANPIAGIAVALLAPIAGALIQMAISRAREFEADRGGAQISGDPQSLATALDKIHRYAAGIPFQAAEAHPATAQMMIMNPLHGGGLQNLFSTHPATEERIARLMEMARTGRFD.

2 consecutive transmembrane segments (helical) span residues 7–27 and 30–50; these read TAML…MIGG and GMTI…WFSD. His-131 is a binding site for Zn(2+). The active site involves Glu-132. His-135 is a Zn(2+) binding site. Helical transmembrane passes span 146-166 and 177-197; these read ITAT…FFGG and IAGI…QMAI. Glu-202 serves as a coordination point for Zn(2+).

This sequence belongs to the peptidase M48B family. Requires Zn(2+) as cofactor.

It is found in the cell inner membrane. This chain is Protease HtpX homolog, found in Burkholderia cenocepacia (strain ATCC BAA-245 / DSM 16553 / LMG 16656 / NCTC 13227 / J2315 / CF5610) (Burkholderia cepacia (strain J2315)).